The chain runs to 553 residues: Membrane protein insertase YidC (553 aa).

The helical transmembrane segment at 6–26 (LIALVLSLLVLVFWEMYFGLF) threads the bilayer. The tract at residues 34–59 (NKTEQAAPTTTQPATPQTVPPQAATP) is disordered. Residues 38–59 (QAAPTTTQPATPQTVPPQAATP) are compositionally biased toward low complexity. The next 5 membrane-spanning stretches (helical) occupy residues 331–351 (LASAVDYGWFTFIAKPLVYVL), 360–380 (NWGVAIILLTIVIKILFWPLT), 424–444 (VNPMGGCLPMLLQIPVFFALY), 477–497 (IPYLGGLPVLTLLMGITMFIQ), and 512–532 (IMMIMPVMFTVFFVNFPSGLV).

It belongs to the OXA1/ALB3/YidC family. Type 1 subfamily. As to quaternary structure, interacts with the Sec translocase complex via SecD. Specifically interacts with transmembrane segments of nascent integral membrane proteins during membrane integration.

The protein resides in the cell inner membrane. Required for the insertion and/or proper folding and/or complex formation of integral membrane proteins into the membrane. Involved in integration of membrane proteins that insert both dependently and independently of the Sec translocase complex, as well as at least some lipoproteins. Aids folding of multispanning membrane proteins. This Syntrophobacter fumaroxidans (strain DSM 10017 / MPOB) protein is Membrane protein insertase YidC.